We begin with the raw amino-acid sequence, 1383 residues long: Palladin (1383 aa).

3 disordered regions span residues 1-22 (MSGT…EESK), 52-169 (DSET…SQLC), and 183-238 (FKAA…KSPG). The segment covering 78 to 96 (HPSHKETKLGEHASRRPQD) has biased composition (basic and acidic residues). Residues 191 to 201 (RSPNGESSSPD) show a composition bias toward polar residues. Ser192 is subject to Phosphoserine. Residues 210 to 223 (QPSALLSASASQSP) show a composition bias toward low complexity. The Ig-like C2-type 1 domain occupies 271–360 (PRFIQKLRSQ…GSDTTSAEVF (90 aa)). The cysteines at positions 292 and 344 are disulfide-linked. Ser401 is modified (phosphoserine). The Ig-like C2-type 2 domain maps to 440 to 539 (PPVFTKELQN…ATSTAQLVVT (100 aa)). A disulfide bond links Cys462 and Cys521. The segment at 562–566 (FPPPP) is interaction with VASP. Disordered regions lie at residues 609–653 (ETNG…LAKP), 673–728 (AGAR…SSGS), and 740–846 (AQNL…RFGH). Ser632 is modified (phosphoserine). Thr635 is subject to Phosphothreonine. Ser641 carries the phosphoserine modification. Residues 646 to 676 (PPPLLAKPKLDPLKLQQLQNQIRLEQEAGAR) form an interaction with LASP1 region. Residues 676–696 (RQPPPAPRSAPPSPPFPPPPA) form an interaction with SORBS2, SPIN90 and SRC region. Residues 677–697 (QPPPAPRSAPPSPPFPPPPAF) show a composition bias toward pro residues. 3 positions are modified to phosphoserine: Ser684, Ser688, and Ser728. A compositionally biased stretch (low complexity) spans 745–763 (PASGHGTPASSPSSSSLPS). Residues 766–831 (SPTPRQFGRA…PPPPPPLPSP (66 aa)) are interaction with EPS8. Residues 796–831 (SPSPPPPPPPVFSPTAAFPVPDVFPLPPPPPPLPSP) form an interaction with SORBS2, SPIN90, SRC and PFN1 region. Composition is skewed to pro residues over residues 797-807 (PSPPPPPPPVF) and 817-830 (DVFP…PLPS). The interval 819–823 (FPLPP) is interaction with VASP. Polar residues predominate over residues 832 to 846 (GQASHCSSPATRFGH). Positions 833-890 (QASHCSSPATRFGHSQTPAAFLSALLPSQPPPAAVNALGLPKGVTPAGFPKKASRTAR) are interaction with ACTN. Phosphoserine is present on residues Ser893, Ser979, and Ser984. One can recognise an Ig-like C2-type 3 domain in the interval 1001 to 1085 (PFFEMKLKHY…MAANPQGRIS (85 aa)). The interval 1096 to 1125 (NQRGRSPRSPSGHPHVRRPRSRSRDSGDEN) is disordered. A compositionally biased stretch (low complexity) spans 1098–1108 (RGRSPRSPSGH). Residues Ser1101, Ser1104, Ser1106, and Ser1116 each carry the phosphoserine modification. Ser1118 bears the Phosphoserine; by PKB/AKT1 mark. Position 1121 is a phosphoserine (Ser1121). Ig-like C2-type domains lie at 1135–1226 (PHFL…LVVA) and 1233–1324 (PPVF…ARLD). 2 interaction with EZR regions span residues 1137–1226 (FLQA…LVVA) and 1236–1326 (FIEK…LDVY). A disulfide bond links Cys1156 and Cys1208. Ser1352 carries the phosphoserine modification.

It belongs to the myotilin/palladin family. As to quaternary structure, interacts with EPS8. Interacts with LASP1. Interacts with VASP. Interacts with ACTN. Interacts with SORBS2. Interacts with PFN1. Interacts with LPP. Interacts with SPIN90. Interacts with SRC. Interacts with EZR. Interacts with RAI14. Post-translationally, phosphorylated predominantly on serines and, to a lesser extent, on tyrosines. Phosphorylation at Ser-1118 by PKB/AKT1 modulates cytoskeletal organization and cell motility. In terms of tissue distribution, detected in both muscle and non-muscle tissues. High expression in prostate, ovary, colon, and kidney. Not detected in spleen, skeletal muscle, lung and peripheral blood lymphocytes (at protein level). Protein is overexpressed in FA6, HPAF, IMIM-PC2, SUIT-2 and PancTu-II sporadic pancreatic cancer cell lines.

It localises to the cytoplasm. The protein resides in the cytoskeleton. The protein localises to the cell junction. Its subcellular location is the focal adhesion. It is found in the myofibril. It localises to the sarcomere. The protein resides in the z line. The protein localises to the cell projection. Its subcellular location is the ruffle. It is found in the podosome. It localises to the lamellipodium. The protein resides in the axon. The protein localises to the growth cone. Its function is as follows. Cytoskeletal protein required for organization of normal actin cytoskeleton. Roles in establishing cell morphology, motility, cell adhesion and cell-extracellular matrix interactions in a variety of cell types. May function as a scaffolding molecule with the potential to influence both actin polymerization and the assembly of existing actin filaments into higher-order arrays. Binds to proteins that bind to either monomeric or filamentous actin. Localizes at sites where active actin remodeling takes place, such as lamellipodia and membrane ruffles. Different isoforms may have functional differences. Involved in the control of morphological and cytoskeletal changes associated with dendritic cell maturation. Involved in targeting ACTN to specific subcellular foci. The polypeptide is Palladin (PALLD) (Homo sapiens (Human)).